The primary structure comprises 184 residues: Shikimate kinase (184 aa).

Position 17-22 (17-22 (GAGKTT)) interacts with ATP. T21 contributes to the Mg(2+) binding site. Substrate contacts are provided by D39, R63, and G85. An ATP-binding site is contributed by R123. R142 provides a ligand contact to substrate.

Belongs to the shikimate kinase family. Monomer. It depends on Mg(2+) as a cofactor.

The protein resides in the cytoplasm. The enzyme catalyses shikimate + ATP = 3-phosphoshikimate + ADP + H(+). Its pathway is metabolic intermediate biosynthesis; chorismate biosynthesis; chorismate from D-erythrose 4-phosphate and phosphoenolpyruvate: step 5/7. In terms of biological role, catalyzes the specific phosphorylation of the 3-hydroxyl group of shikimic acid using ATP as a cosubstrate. The protein is Shikimate kinase of Burkholderia thailandensis (strain ATCC 700388 / DSM 13276 / CCUG 48851 / CIP 106301 / E264).